We begin with the raw amino-acid sequence, 316 residues long: Ribosomal protein L11 methyltransferase (316 aa).

Positions 157, 178, 200, and 243 each coordinate S-adenosyl-L-methionine.

This sequence belongs to the methyltransferase superfamily. PrmA family.

The protein localises to the cytoplasm. It carries out the reaction L-lysyl-[protein] + 3 S-adenosyl-L-methionine = N(6),N(6),N(6)-trimethyl-L-lysyl-[protein] + 3 S-adenosyl-L-homocysteine + 3 H(+). In terms of biological role, methylates ribosomal protein L11. In Streptococcus pneumoniae (strain 70585), this protein is Ribosomal protein L11 methyltransferase.